The sequence spans 98 residues: uncharacterized protein (98 aa).

The first 19 residues, 1 to 19 (MTERRRALSLAAVVDSINL), serve as a signal peptide directing secretion. The disordered stretch occupies residues 40-98 (PPGGSFSGIKRESRRKRPSRNEIYGGGVLEQEVRMRRWSKTASPPVSLHHRPLGPARKP). Residues 87–98 (LHHRPLGPARKP) are compositionally biased toward basic residues.

This is an uncharacterized protein from Homo sapiens (Human).